Reading from the N-terminus, the 487-residue chain is MMHFKSGLELTELQNMTVPEDDNISNDSNDFTEVENGQINSKFISDRESRRSLTNSHLEKKKCDEYIPGTTSLGMSVFNLSNAIMGSGILGLAFALANTGILLFLVLLTSVTLLSIYSINLLLICSKETGCMVYEKLGEQVFGTTGKFVIFGATSLQNTGAMLSYLFIVKNELPSAIKFLMGKEETFSAWYVDGRVLVVIVTFGIILPLCLLKNLGYLGYTSGFSLSCMVFFLIVVIYKKFQIPCIVPELNSTISANSTNADTCTPKYVTLNSKTVYALPTIAFAFVCHPSVLPIYSELKDRSQKKMQMVSNISFFAMFVMYFLTAIFGYLTFYDNVQSDLLHKYQGKDDILILTVRLAVIVAVILTVPVLFFTVRSSLFELAKKTKFNLCRHTVVTCILLVVINLLVISIPSMKDIFGVVGVTSANMLIFILPSSLYLKITDQDGDKGTQRIWAALFLGLGVLFSLVSIPLVIYDWACSSSSDEGH.

Topologically, residues 1–74 (MMHFKSGLEL…EYIPGTTSLG (74 aa)) are cytoplasmic. S6 bears the Phosphoserine mark. Residue T11 is modified to Phosphothreonine. Phosphoserine is present on residues S25, S28, S49, and S52. The residue at position 54 (T54) is a Phosphothreonine. At S56 the chain carries Phosphoserine. Residues 75–97 (MSVFNLSNAIMGSGILGLAFALA) traverse the membrane as a helical segment. Residues 98–112 (NTGILLFLVLLTSVT) lie on the Extracellular side of the membrane. The helical transmembrane segment at 113 to 133 (LLSIYSINLLLICSKETGCMV) threads the bilayer. Residues 134–147 (YEKLGEQVFGTTGK) are Cytoplasmic-facing. Residues 148 to 168 (FVIFGATSLQNTGAMLSYLFI) traverse the membrane as a helical segment. At 169 to 188 (VKNELPSAIKFLMGKEETFS) the chain is on the extracellular side. A helical transmembrane segment spans residues 189 to 211 (AWYVDGRVLVVIVTFGIILPLCL). Over 212–216 (LKNLG) the chain is Cytoplasmic. Residues 217-237 (YLGYTSGFSLSCMVFFLIVVI) form a helical membrane-spanning segment. Residues 238–275 (YKKFQIPCIVPELNSTISANSTNADTCTPKYVTLNSKT) lie on the Extracellular side of the membrane. A disulfide bridge links C245 with C264. N-linked (GlcNAc...) asparagine glycans are attached at residues N251 and N257. The helical transmembrane segment at 276 to 296 (VYALPTIAFAFVCHPSVLPIY) threads the bilayer. Over 297-312 (SELKDRSQKKMQMVSN) the chain is Cytoplasmic. A helical transmembrane segment spans residues 313–333 (ISFFAMFVMYFLTAIFGYLTF). Topologically, residues 334 to 350 (YDNVQSDLLHKYQGKDD) are extracellular. The helical transmembrane segment at 351 to 371 (ILILTVRLAVIVAVILTVPVL) threads the bilayer. The Cytoplasmic segment spans residues 372-393 (FFTVRSSLFELAKKTKFNLCRH). A helical transmembrane segment spans residues 394-414 (TVVTCILLVVINLLVISIPSM). The Extracellular portion of the chain corresponds to 415–416 (KD). The chain crosses the membrane as a helical span at residues 417–437 (IFGVVGVTSANMLIFILPSSL). The Cytoplasmic portion of the chain corresponds to 438 to 452 (YLKITDQDGDKGTQR). A helical transmembrane segment spans residues 453–473 (IWAALFLGLGVLFSLVSIPLV). The Extracellular portion of the chain corresponds to 474–487 (IYDWACSSSSDEGH).

It belongs to the amino acid/polyamine transporter 2 family. N-glycosylation plays an important role in the L-glutamine transport.

The protein resides in the cell membrane. It carries out the reaction L-glutamine(in) + Na(+)(in) = L-glutamine(out) + Na(+)(out). It catalyses the reaction L-alanine(in) + Na(+)(in) = L-alanine(out) + Na(+)(out). The catalysed reaction is L-asparagine(in) + Na(+)(in) = L-asparagine(out) + Na(+)(out). The enzyme catalyses L-histidine(in) + Na(+)(in) = L-histidine(out) + Na(+)(out). It carries out the reaction L-serine(in) + Na(+)(in) = L-serine(out) + Na(+)(out). It catalyses the reaction L-cysteine(in) + Na(+)(in) = L-cysteine(out) + Na(+)(out). The catalysed reaction is L-methionine(in) + Na(+)(in) = L-methionine(out) + Na(+)(out). The enzyme catalyses glycine(in) + Na(+)(in) = glycine(out) + Na(+)(out). It carries out the reaction L-threonine(in) + Na(+)(in) = L-threonine(out) + Na(+)(out). It catalyses the reaction L-proline(in) + Na(+)(in) = L-proline(out) + Na(+)(out). Inhibited by alpha-(methylamino)isobutyric acid (MeAIB). Inhibited by lithium, potassium, choline ions, N-methylglucamine. The pH dependence has an allosteric effect on the transport. Functionally, symporter that cotransports short-chain neutral amino acids and sodium ions from the extraccellular to the intracellular side of the cell membrane. The transport is elctrogenic, pH dependent and driven by the Na(+) electrochemical gradient. Participates in the astroglia-derived glutamine transport into GABAergic interneurons for neurotransmitter GABA de novo synthesis. May also contributes to amino acid transport in placental trophoblast. Regulates synaptic plasticity. The sequence is that of Sodium-coupled neutral amino acid symporter 1 from Pongo abelii (Sumatran orangutan).